The following is a 134-amino-acid chain: MSDLYRFGISLERKLIESFDRHIKAQGYQSRSEALRDLIREELLRKTTAEGGLVAGAIVMTYDHHKRDLVNRLIDIQHDFHDLIISTQHVHLDHENCLEVIAVKGNAPEIEKLSSALKVLVGVKHLDLSLSSAD.

Ni(2+) contacts are provided by histidine 78, histidine 89, histidine 91, and cysteine 97.

Belongs to the transcriptional regulatory CopG/NikR family. Requires Ni(2+) as cofactor.

In terms of biological role, transcriptional regulator. The protein is Putative nickel-responsive regulator of Chlorobaculum tepidum (strain ATCC 49652 / DSM 12025 / NBRC 103806 / TLS) (Chlorobium tepidum).